We begin with the raw amino-acid sequence, 354 residues long: Phospho-N-acetylmuramoyl-pentapeptide-transferase (354 aa).

10 consecutive transmembrane segments (helical) span residues 23 to 43 (IAFF…IAWA), 66 to 86 (TPTM…LLCS), 88 to 108 (LTNT…FIGF), 138 to 158 (FALS…FIPF), 161 to 181 (YALF…ITAS), 193 to 213 (GLAS…VYLC), 227 to 247 (VVGV…ILGF), 257 to 277 (VFMG…TGVV), 282 to 302 (ILLI…ILQV), and 331 to 351 (KIIV…LTTL).

The protein belongs to the glycosyltransferase 4 family. MraY subfamily. Mg(2+) is required as a cofactor.

Its subcellular location is the cell inner membrane. The catalysed reaction is UDP-N-acetyl-alpha-D-muramoyl-L-alanyl-gamma-D-glutamyl-meso-2,6-diaminopimeloyl-D-alanyl-D-alanine + di-trans,octa-cis-undecaprenyl phosphate = di-trans,octa-cis-undecaprenyl diphospho-N-acetyl-alpha-D-muramoyl-L-alanyl-D-glutamyl-meso-2,6-diaminopimeloyl-D-alanyl-D-alanine + UMP. Its pathway is cell wall biogenesis; peptidoglycan biosynthesis. Catalyzes the initial step of the lipid cycle reactions in the biosynthesis of the cell wall peptidoglycan: transfers peptidoglycan precursor phospho-MurNAc-pentapeptide from UDP-MurNAc-pentapeptide onto the lipid carrier undecaprenyl phosphate, yielding undecaprenyl-pyrophosphoryl-MurNAc-pentapeptide, known as lipid I. The chain is Phospho-N-acetylmuramoyl-pentapeptide-transferase from Campylobacter hominis (strain ATCC BAA-381 / DSM 21671 / CCUG 45161 / LMG 19568 / NCTC 13146 / CH001A).